The chain runs to 371 residues: DNA replication and repair protein RecF (371 aa).

30–37 (GENAQGKT) is a binding site for ATP.

Belongs to the RecF family.

The protein localises to the cytoplasm. In terms of biological role, the RecF protein is involved in DNA metabolism; it is required for DNA replication and normal SOS inducibility. RecF binds preferentially to single-stranded, linear DNA. It also seems to bind ATP. The polypeptide is DNA replication and repair protein RecF (Staphylococcus epidermidis (strain ATCC 12228 / FDA PCI 1200)).